A 430-amino-acid polypeptide reads, in one-letter code: Pyrokinin-1 receptor (430 aa).

Over 1–16 (MSAGNMSHDLGPPRDP) the chain is Extracellular. Asparagine 5 is a glycosylation site (N-linked (GlcNAc...) asparagine). The chain crosses the membrane as a helical span at residues 17–37 (LAIVIPVTVVYSLIFITGVVG). Topologically, residues 38-53 (NISTCIVIKKNRSMHT) are cytoplasmic. A helical membrane pass occupies residues 54–74 (ATNYYLFSLAISDFLLLLSGV). At 75 to 96 (PQEVSYIWSKYPYVFGEYICIG) the chain is on the extracellular side. Cysteines 94 and 171 form a disulfide. The chain crosses the membrane as a helical span at residues 97-117 (RGLLAETSANATVLTITAFTV). Residues 118 to 140 (ERYIAICHPFLGQAMSKLSRAIR) lie on the Cytoplasmic side of the membrane. The helical transmembrane segment at 141-161 (IIVLVWIMAIVTAIPQAAQFG) threads the bilayer. The Extracellular portion of the chain corresponds to 162 to 185 (IEHYSGVEQCGIVRVIVKHSFQLS). A helical transmembrane segment spans residues 186–206 (TFIFFLAPMSIILVLYLLIGV). Residues 207–281 (HLYRSTLVEG…GRLNHYGTRR (75 aa)) lie on the Cytoplasmic side of the membrane. A helical membrane pass occupies residues 282-302 (VLRMLVAVVVCFFLCWAPFHA). Topologically, residues 303 to 321 (QRLIAIYAPARGAKLRDQH) are extracellular. The chain crosses the membrane as a helical span at residues 322–342 (EFVYTVMTYVSGVLYYLSTCI). At 343–430 (NPLLYNIMSH…QYAMIGVQVN (88 aa)) the chain is on the cytoplasmic side. The segment covering 388–397 (TNSSQTQRFS) has biased composition (polar residues). Positions 388–413 (TNSSQTQRFSIESAEQPKPSIMQNPT) are disordered.

The protein belongs to the G-protein coupled receptor 1 family.

Its subcellular location is the cell membrane. In terms of biological role, receptor for the neuropeptide CAP-3/pyrokinin-1 (TGPSASSGLWFGPRL-amide). Also activated weakly by other neuropeptides terminating in the sequence PRL-amide including pyrokinin-2, Hug-gamma, and ecdysis-triggering-hormone-1. The activity of this receptor is mediated by G proteins which activate a phosphatidyl-inositol-calcium second messenger system. This Drosophila melanogaster (Fruit fly) protein is Pyrokinin-1 receptor.